Here is a 241-residue protein sequence, read N- to C-terminus: Small ribosomal subunit protein uS2 (241 aa).

This sequence belongs to the universal ribosomal protein uS2 family.

This chain is Small ribosomal subunit protein uS2, found in Hamiltonella defensa subsp. Acyrthosiphon pisum (strain 5AT).